The following is a 265-amino-acid chain: Hydroxyethylthiazole kinase 2 (265 aa).

Methionine 39 lines the substrate pocket. ATP contacts are provided by lysine 115 and threonine 168. A substrate-binding site is contributed by glycine 195.

The protein belongs to the Thz kinase family. Requires Mg(2+) as cofactor.

The enzyme catalyses 5-(2-hydroxyethyl)-4-methylthiazole + ATP = 4-methyl-5-(2-phosphooxyethyl)-thiazole + ADP + H(+). It functions in the pathway cofactor biosynthesis; thiamine diphosphate biosynthesis; 4-methyl-5-(2-phosphoethyl)-thiazole from 5-(2-hydroxyethyl)-4-methylthiazole: step 1/1. Its function is as follows. Catalyzes the phosphorylation of the hydroxyl group of 4-methyl-5-beta-hydroxyethylthiazole (THZ). In Clostridium botulinum (strain Okra / Type B1), this protein is Hydroxyethylthiazole kinase 2.